A 456-amino-acid polypeptide reads, in one-letter code: B-cell linker protein (456 aa).

Residues 36–301 (IKKLKVKAPP…QSPVFPPAQK (266 aa)) form a disordered region. Acidic residues predominate over residues 57-74 (PADEEEQWSDDFDSDYEN). 5 positions are modified to phosphotyrosine; by SYK: Tyr72, Tyr84, Tyr96, Tyr178, and Tyr189. Over residues 173–187 (EDEADYVVPVEDNDE) the composition is skewed to acidic residues. The span at 212–226 (PNSSTPASPPGTASG) shows a compositional bias: low complexity. Over residues 236 to 245 (SPPPAAPSPL) the composition is skewed to pro residues. Low complexity predominate over residues 251–260 (KPTTPLKTTP). Basic and acidic residues predominate over residues 271-289 (CEEKPIPAERHRGSSHRQE). Residues 346-453 (WYAGACDRKS…KDSTRLKYAV (108 aa)) enclose the SH2 domain.

In terms of assembly, associates with PLCG1, VAV1 and NCK1 in a B-cell antigen receptor-dependent fashion. Interacts with VAV3, PLCG2 and GRB2. Interacts through its SH2 domain with CD79A. Interacts (via SH2 domain) with SYK; phosphorylated and activated by SYK. Interacts (via SH2 domain) with SCIMP; this interaction is dependent on phosphorylation of SCIMP 'Tyr-131'. Post-translationally, following BCR activation, phosphorylated on tyrosine residues by SYK and LYN. When phosphorylated, serves as a scaffold to assemble downstream targets of antigen activation, including PLCG1, VAV1, GRB2 and NCK1. Phosphorylation of Tyr-84, Tyr-178 and Tyr-189 facilitates PLCG1 binding. Phosphorylation of Tyr-96 facilitates BTK binding. Phosphorylation of Tyr-72 facilitates VAV1 and NCK1 binding. Phosphorylation is required for both Ca(2+) and MAPK signaling pathways. Expressed in B-cell lineage and fibroblast cell lines (at protein level). Highest levels of expression in the spleen, with lower levels in the liver, kidney, pancreas, small intestines and colon.

It localises to the cytoplasm. Its subcellular location is the cell membrane. Functions as a central linker protein, downstream of the B-cell receptor (BCR), bridging the SYK kinase to a multitude of signaling pathways and regulating biological outcomes of B-cell function and development. Plays a role in the activation of ERK/EPHB2, MAP kinase p38 and JNK. Modulates AP1 activation. Important for the activation of NF-kappa-B and NFAT. Plays an important role in BCR-mediated PLCG1 and PLCG2 activation and Ca(2+) mobilization and is required for trafficking of the BCR to late endosomes. However, does not seem to be required for pre-BCR-mediated activation of MAP kinase and phosphatidyl-inositol 3 (PI3) kinase signaling. May be required for the RAC1-JNK pathway. Plays a critical role in orchestrating the pro-B cell to pre-B cell transition. May play an important role in BCR-induced B-cell apoptosis. This Homo sapiens (Human) protein is B-cell linker protein (BLNK).